We begin with the raw amino-acid sequence, 106 residues long: MIPGEYHVKPGQIALNTGRATCRVVVENHGDRPIQVGSHYHFAEVNPALKFDRQQVTGYRLNIPAGTAVRFEPGQKREVELVAFAGHRAVFGFRGEVMGPLEANDE.

The protein belongs to the urease beta subunit family. Heterotrimer of UreA (gamma), UreB (beta) and UreC (alpha) subunits. Three heterotrimers associate to form the active enzyme.

It is found in the cytoplasm. The catalysed reaction is urea + 2 H2O + H(+) = hydrogencarbonate + 2 NH4(+). It participates in nitrogen metabolism; urea degradation; CO(2) and NH(3) from urea (urease route): step 1/1. The chain is Urease subunit beta from Klebsiella pneumoniae (strain 342).